Consider the following 271-residue polypeptide: Dehydrodolichyl diphosphate synthase 7 (271 aa).

A helical transmembrane segment spans residues 24-41 (FLFRVLCVGPIPTNISFI).

The protein belongs to the UPP synthase family. It depends on Mg(2+) as a cofactor.

It is found in the endoplasmic reticulum membrane. It participates in protein modification; protein glycosylation. Functionally, catalyzes cis-prenyl chain elongation to produce the polyprenyl backbone of dolichol, a glycosyl carrier-lipid required for the biosynthesis of several classes of glycoprotein. In Arabidopsis thaliana (Mouse-ear cress), this protein is Dehydrodolichyl diphosphate synthase 7.